Here is a 902-residue protein sequence, read N- to C-terminus: AAA+ ATPase ClpV1 (902 aa).

A Clp R domain is found at 10–151 (FGKLNSLAYK…KVEALTERFD (142 aa)). Repeat stretches follow at residues 13–78 (LNSL…LDRL) and 88–151 (LSSH…ERFD). An ATP-binding site is contributed by 237-244 (GEAGVGKT). A coiled-coil region spans residues 441–559 (AEVDDSRRRI…AQLSALQGEE (119 aa)). An ATP-binding site is contributed by 640-647 (GTSGVGKT).

It belongs to the ClpA/ClpB family. Interacts with TagJ.

It is found in the cytoplasm. Its function is as follows. Component of the H1 type VI (H1-T6SS) secretion system that plays a role in the release of toxins targeting both eukaryotic and prokaryotic species. Acts as an AAA(+) ATPase that disassembles the contracted sheath, which resets the systems for reassembly of an extended sheath that is ready to fire again. The chain is AAA+ ATPase ClpV1 (clpV1) from Pseudomonas aeruginosa (strain ATCC 15692 / DSM 22644 / CIP 104116 / JCM 14847 / LMG 12228 / 1C / PRS 101 / PAO1).